The sequence spans 222 residues: Germin-like protein subfamily 1 member 20 (222 aa).

The first 22 residues, 1-22, serve as a signal peptide directing secretion; it reads MRVSQSLVPFAIIALVLSFVNA. Cys-32 and Cys-48 are oxidised to a cystine. One can recognise a Cupin type-1 domain in the interval 62-213; sequence SGLNVPGNTN…AFQLDASVVK (152 aa). The N-linked (GlcNAc...) asparagine glycan is linked to Asn-77. 4 residues coordinate Mn(2+): His-110, His-112, Glu-117, and His-159.

This sequence belongs to the germin family. As to quaternary structure, oligomer (believed to be a pentamer but probably hexamer). As to expression, expressed in stems and developing embryos.

The protein resides in the secreted. The protein localises to the extracellular space. It is found in the apoplast. Functionally, may play a role in plant defense. Probably has no oxalate oxidase activity even if the active site is conserved. This Arabidopsis thaliana (Mouse-ear cress) protein is Germin-like protein subfamily 1 member 20 (GLP5A).